A 247-amino-acid chain; its full sequence is UPF0309 protein lin2794 (247 aa).

In terms of domain architecture, SIS spans Val31–Pro214.

Belongs to the UPF0309 family.

This chain is UPF0309 protein lin2794, found in Listeria innocua serovar 6a (strain ATCC BAA-680 / CLIP 11262).